A 1318-amino-acid chain; its full sequence is Ubiquitin carboxyl-terminal hydrolase 19 (1318 aa).

Residues M1–L109 form a disordered region. The Cytoplasmic segment spans residues M1–Y1291. Basic and acidic residues predominate over residues D28–G44. Over residues P83–E94 the composition is skewed to polar residues. Basic and acidic residues predominate over residues E95–D107. In terms of domain architecture, CS 1 spans T113–L202. Residues K234 to K255 form a disordered region. The residue at position 244 (S244) is a Phosphoserine. A CS 2 domain is found at L282–E384. The segment at V390 to D479 is disordered. 2 stretches are compositionally biased toward basic and acidic residues: residues E420–D436 and P447–T457. A USP domain is found at T497–R1214. Catalysis depends on C506, which acts as the Nucleophile. Residues C791, C794, C808, C811, C817, C821, H829, and C833 each contribute to the Zn(2+) site. An MYND-type zinc finger spans residues C791 to C833. Residue H1165 is the Proton acceptor of the active site. Basic and acidic residues predominate over residues V1218 to D1232. The tract at residues V1218 to A1239 is disordered. A helical membrane pass occupies residues F1292–V1312. The Lumenal segment spans residues S1313 to R1318.

The protein belongs to the peptidase C19 family. In terms of assembly, interacts with RNF123. Interacts with BIRC2/c-IAP1, BIRC3/c-IAP2 and XIAP/BIRC4. Interacts with HIF1A (via N-terminus). Interacts (via N-terminus) with HSP90AA1; this interaction activates the deubiquitinase activity of USP19.

It is found in the endoplasmic reticulum membrane. It carries out the reaction Thiol-dependent hydrolysis of ester, thioester, amide, peptide and isopeptide bonds formed by the C-terminal Gly of ubiquitin (a 76-residue protein attached to proteins as an intracellular targeting signal).. Its function is as follows. Deubiquitinating enzyme that regulates the degradation of various proteins by removing ubiquitin moieties, thereby preventing their proteasomal degradation. Stabilizes RNF123, which promotes CDKN1B degradation and contributes to cell proliferation. Decreases the levels of ubiquitinated proteins during skeletal muscle formation and acts to repress myogenesis. Modulates transcription of major myofibrillar proteins. Also involved in turnover of endoplasmic-reticulum-associated degradation (ERAD) substrates. Mechanistically, deubiquitinates and thereby stabilizes several E3 ligases involved in the ERAD pathway including SYVN1 or MARCHF6. Regulates the stability of other E3 ligases including BIRC2/c-IAP1 and BIRC3/c-IAP2 by preventing their ubiquitination. Required for cells to mount an appropriate response to hypoxia by rescuing HIF1A from degradation in a non-catalytic manner and by mediating the deubiquitination of FUNDC1. Attenuates mitochondrial damage and ferroptosis by targeting and stabilizing NADPH oxidase 4/NOX4. Negatively regulates TNF-alpha- and IL-1beta-triggered NF-kappa-B activation by hydrolyzing 'Lys-27'- and 'Lys-63'-linked polyubiquitin chains from MAP3K7. Modulates also the protein level and aggregation of polyQ-expanded huntingtin/HTT through HSP90AA1. This chain is Ubiquitin carboxyl-terminal hydrolase 19 (USP19), found in Homo sapiens (Human).